The chain runs to 199 residues: Hematopoietic prostaglandin D synthase (199 aa).

The 78-residue stretch at 2 to 79 (PNYKLLYFNM…YLTKNTDLAG (78 aa)) folds into the GST N-terminal domain. Glutathione is bound by residues tyrosine 8, arginine 14, tryptophan 39, 49–51 (GKI), and 63–64 (QS). Residues 81–199 (TELEQCQVDA…WILKRPQTKL (119 aa)) enclose the GST C-terminal domain.

This sequence belongs to the GST superfamily. Sigma family. As to quaternary structure, homodimer. Glutathione is required as a cofactor. In terms of tissue distribution, highly expressed in spleen and bone marrow. Lower levels of expression in small intestine, colon, liver, pancreas and skin. Not detected in brain, heart, lung or kidney (at protein level).

The protein localises to the cytoplasm. The enzyme catalyses prostaglandin H2 = prostaglandin D2. It catalyses the reaction RX + glutathione = an S-substituted glutathione + a halide anion + H(+). It carries out the reaction 2-glyceryl-prostaglandin H2 = 2-glyceryl-prostaglandin D2. Bifunctional enzyme which catalyzes both the conversion of PGH2 to PGD2, a prostaglandin involved in smooth muscle contraction/relaxation and a potent inhibitor of platelet aggregation, and the conjugation of glutathione with a wide range of aryl halides and organic isothiocyanates. Also exhibits low glutathione-peroxidase activity towards cumene hydroperoxide. In Rattus norvegicus (Rat), this protein is Hematopoietic prostaglandin D synthase.